The primary structure comprises 494 residues: Anaerobic nitric oxide reductase flavorubredoxin (494 aa).

The tract at residues 30–210 (TKGTSYNSYL…PFSALVTAKI (181 aa)) is zinc metallo-hydrolase. Residues His79, Glu81, Asp83, His147, Asp166, and His227 each coordinate Fe cation. Residues 254–393 (ITIFYDSMSN…ECREHGQQIA (140 aa)) form the Flavodoxin-like domain. FMN contacts are provided by residues 260 to 264 (SMSNN) and 342 to 369 (AFGS…ETAI). Positions 441–492 (CQCMVCTVCNWVYDPAKGEPNQGIEVGTTWADVPDYFLCPECHLGKDVFVEY) constitute a Rubredoxin-like domain. Cys446, Cys449, Cys479, and Cys482 together coordinate Fe cation.

The protein in the N-terminal section; belongs to the zinc metallo-hydrolase group 3 family. In terms of assembly, homotetramer. The cofactor is Fe cation. FMN serves as cofactor.

It is found in the cytoplasm. It functions in the pathway nitrogen metabolism; nitric oxide reduction. Anaerobic nitric oxide reductase; uses NADH to detoxify nitric oxide (NO), protecting several 4Fe-4S NO-sensitive enzymes. Has at least 2 reductase partners, only one of which (NorW, flavorubredoxin reductase) has been identified. NO probably binds to the di-iron center; electrons enter from the NorW at rubredoxin and are transferred sequentially to the FMN center and the di-iron center. Also able to function as an aerobic oxygen reductase. The protein is Anaerobic nitric oxide reductase flavorubredoxin of Vibrio vulnificus (strain YJ016).